The sequence spans 331 residues: Glutamyl-Q tRNA(Asp) synthetase (331 aa).

Over residues 1–30 (MVQQAVIQRSANQQLSNQRSANQRATNQPT) the composition is skewed to polar residues. The disordered stretch occupies residues 1-36 (MVQQAVIQRSANQQLSNQRSANQRATNQPTEYVGRF). L-glutamate-binding positions include 35–39 (RFAPS) and Glu-71. The 'HIGH' region signature appears at 38 to 48 (PSPSGDLHFGS). Residues Cys-127, Cys-129, Tyr-141, and Cys-145 each coordinate Zn(2+). Positions 198 and 216 each coordinate L-glutamate. Positions 254-258 (KLSKQ) match the 'KMSKS' region motif. An ATP-binding site is contributed by Lys-257.

Belongs to the class-I aminoacyl-tRNA synthetase family. GluQ subfamily. Zn(2+) is required as a cofactor.

Catalyzes the tRNA-independent activation of glutamate in presence of ATP and the subsequent transfer of glutamate onto a tRNA(Asp). Glutamate is transferred on the 2-amino-5-(4,5-dihydroxy-2-cyclopenten-1-yl) moiety of the queuosine in the wobble position of the QUC anticodon. The polypeptide is Glutamyl-Q tRNA(Asp) synthetase (Yersinia pseudotuberculosis serotype I (strain IP32953)).